The chain runs to 413 residues: Histidinol-phosphate aminotransferase, chloroplastic (413 aa).

The transit peptide at 1–35 (MGVIELCNTSSICIGRANPSCCSIERNQRRRIICM) directs the protein to the chloroplast. At lysine 273 the chain carries N6-(pyridoxal phosphate)lysine.

It belongs to the class-II pyridoxal-phosphate-dependent aminotransferase family. Histidinol-phosphate aminotransferase subfamily. As to quaternary structure, homodimer. It depends on pyridoxal 5'-phosphate as a cofactor. Expressed in flowers, leaves, stems and roots.

The protein localises to the plastid. Its subcellular location is the chloroplast. The catalysed reaction is L-histidinol phosphate + 2-oxoglutarate = 3-(imidazol-4-yl)-2-oxopropyl phosphate + L-glutamate. Its pathway is amino-acid biosynthesis; L-histidine biosynthesis; L-histidine from 5-phospho-alpha-D-ribose 1-diphosphate: step 7/9. In Nicotiana plumbaginifolia (Leadwort-leaved tobacco), this protein is Histidinol-phosphate aminotransferase, chloroplastic (HPA).